The chain runs to 829 residues: Leucine--tRNA ligase (829 aa).

Residues 40 to 50 (PYPSGNIHMGH) carry the 'HIGH' region motif. The 'KMSKS' region signature appears at 581 to 585 (KMSKS). Residue K584 participates in ATP binding.

This sequence belongs to the class-I aminoacyl-tRNA synthetase family.

It localises to the cytoplasm. The catalysed reaction is tRNA(Leu) + L-leucine + ATP = L-leucyl-tRNA(Leu) + AMP + diphosphate. The sequence is that of Leucine--tRNA ligase from Nitratidesulfovibrio vulgaris (strain ATCC 29579 / DSM 644 / CCUG 34227 / NCIMB 8303 / VKM B-1760 / Hildenborough) (Desulfovibrio vulgaris).